Consider the following 385-residue polypeptide: UPF0764 protein C16orf89 homolog (385 aa).

A signal peptide spans 1–20; it reads MARLGLLLLLLLALPPHFSS. The tract at residues 344–385 is disordered; it reads AHPEYYPNHGDPYSSSQSPASNYQDGAAGPDVQRTGRPLSVS. Positions 356-367 are enriched in polar residues; sequence YSSSQSPASNYQ.

The protein belongs to the UPF0764 family. As to quaternary structure, homodimer. Glycosylated. As to expression, predominantly expressed in thyroid tissue.

The protein resides in the secreted. This Mus musculus (Mouse) protein is UPF0764 protein C16orf89 homolog.